Reading from the N-terminus, the 577-residue chain is Heavy metal-associated isoprenylated plant protein 34 (577 aa).

An HMA domain is found at 9–72 (LQTCVLKVNV…KLSKSGKHAE (64 aa)). Residues Cys-20 and Cys-23 each contribute to the a metal cation site. Residues 77–87 (GGGGGGGGGKG) are compositionally biased toward gly residues. Disordered stretches follow at residues 77-136 (GGGG…QPMQ) and 150-451 (AAHG…GPGG). Low complexity predominate over residues 97–106 (NLNMGGNNKP). A compositionally biased stretch (gly residues) spans 118-129 (KAGGGGGGGQNH). Over residues 168 to 177 (KDQKKSVKFA) the composition is skewed to basic and acidic residues. A compositionally biased stretch (acidic residues) spans 178-213 (DDEDDEFSEDDYDDEDFSEDDYDDDEFDDDEDDDDE). A compositionally biased stretch (low complexity) spans 227–244 (HMPPNKMMMPNKMMPQMG). Gly residues-rich tracts occupy residues 245 to 254 (GHHGNGGGPK) and 266 to 281 (FKGG…GGGF). Basic and acidic residues-rich tracts occupy residues 294–326 (KNGK…KTDA) and 344–358 (NGDE…DGHG). Composition is skewed to gly residues over residues 379–392 (KKGG…GHGG) and 420–451 (GIGG…GPGG). The residue at position 574 (Cys-574) is a Cysteine methyl ester. Cys-574 is lipidated: S-farnesyl cysteine. Positions 575–577 (SIM) are cleaved as a propeptide — removed in mature form.

This sequence belongs to the HIPP family.

In terms of biological role, heavy-metal-binding protein. The protein is Heavy metal-associated isoprenylated plant protein 34 of Arabidopsis thaliana (Mouse-ear cress).